We begin with the raw amino-acid sequence, 128 residues long: uncharacterized protein (128 aa).

This is an uncharacterized protein from Schizosaccharomyces pombe (strain 972 / ATCC 24843) (Fission yeast).